The primary structure comprises 299 residues: tRNA dimethylallyltransferase (299 aa).

11–18 contributes to the ATP binding site; it reads GPTAVGKT. 13 to 18 serves as a coordination point for substrate; sequence TAVGKT. An interaction with substrate tRNA region spans residues 36 to 39; that stretch reads DSQQ.

This sequence belongs to the IPP transferase family. Monomer. Requires Mg(2+) as cofactor.

The enzyme catalyses adenosine(37) in tRNA + dimethylallyl diphosphate = N(6)-dimethylallyladenosine(37) in tRNA + diphosphate. Its function is as follows. Catalyzes the transfer of a dimethylallyl group onto the adenine at position 37 in tRNAs that read codons beginning with uridine, leading to the formation of N6-(dimethylallyl)adenosine (i(6)A). This chain is tRNA dimethylallyltransferase, found in Streptococcus pyogenes serotype M1.